A 154-amino-acid chain; its full sequence is Lipoprotein signal peptidase (154 aa).

Helical transmembrane passes span 55–75 and 84–104; these read GHMW…IYIM and LFSI…IDRV. Catalysis depends on residues Asp111 and Asp129. A helical membrane pass occupies residues 124–144; that stretch reads IFNVADAALSVGVVLMLVYVF.

It belongs to the peptidase A8 family.

It is found in the cell membrane. It catalyses the reaction Release of signal peptides from bacterial membrane prolipoproteins. Hydrolyzes -Xaa-Yaa-Zaa-|-(S,diacylglyceryl)Cys-, in which Xaa is hydrophobic (preferably Leu), and Yaa (Ala or Ser) and Zaa (Gly or Ala) have small, neutral side chains.. The protein operates within protein modification; lipoprotein biosynthesis (signal peptide cleavage). Its function is as follows. This protein specifically catalyzes the removal of signal peptides from prolipoproteins. The sequence is that of Lipoprotein signal peptidase from Listeria monocytogenes serotype 4b (strain CLIP80459).